The chain runs to 222 residues: MSLIGKLFGTGGKGAKGPSPQEAIQKLRDTEEMLAKKQEFLEKKIEQELVTAKKHGTKNKRAALQALKRKKRYEKQLAQIDGTLSTIEFQREALENANTNTEVLKNMGFAAKAMKAAHDNMDIEKVDELMQDIADQQELAQEISDAISKPVGFGEDFDEDELMAELEELEQEELDKNLLEVQGPETVPLPNVPAASLPAKPVKKKQEEDDDDMRELENWATA.

Disordered stretches follow at residues 1–21 (MSLI…PSPQ) and 177–222 (NLLE…WATA). The stretch at 21–182 (QEAIQKLRDT…ELDKNLLEVQ (162 aa)) forms a coiled coil.

It belongs to the SNF7 family. Probable core component of the endosomal sorting required for transport complex III (ESCRT-III). ESCRT-III components are thought to multimerize to form a flat lattice on the perimeter membrane of the endosome.

It localises to the cytoplasm. Its subcellular location is the cytosol. It is found in the late endosome membrane. The protein localises to the midbody. Its function is as follows. Probable core component of the endosomal sorting required for transport complex III (ESCRT-III) which is involved in multivesicular bodies (MVBs) formation and sorting of endosomal cargo proteins into MVBs. MVBs contain intraluminal vesicles (ILVs) that are generated by invagination and scission from the limiting membrane of the endosome and mostly are delivered to lysosomes enabling degradation of membrane proteins, such as stimulated growth factor receptors, lysosomal enzymes and lipids. The sequence is that of Charged multivesicular body protein 4b (chmp4b) from Xenopus laevis (African clawed frog).